Reading from the N-terminus, the 308-residue chain is L-lactate dehydrogenase 2 (308 aa).

NAD(+) contacts are provided by residues Val14, Asp35, Tyr65, and 79–80 (GA). A substrate-binding site is contributed by Arg88. Ser101 provides a ligand contact to NAD(+). 120–123 (NPVD) lines the substrate pocket. Thr143 provides a ligand contact to NAD(+). A substrate-binding site is contributed by 148 to 151 (DTAR). The active-site Proton acceptor is the His175. Thr225 serves as a coordination point for substrate.

This sequence belongs to the LDH/MDH superfamily. LDH family. In terms of assembly, homotetramer.

The protein localises to the cytoplasm. It carries out the reaction (S)-lactate + NAD(+) = pyruvate + NADH + H(+). The protein operates within fermentation; pyruvate fermentation to lactate; (S)-lactate from pyruvate: step 1/1. In terms of biological role, catalyzes the conversion of lactate to pyruvate. This is L-lactate dehydrogenase 2 from Lactobacillus johnsonii (strain CNCM I-12250 / La1 / NCC 533).